Consider the following 323-residue polypeptide: Transcription factor LUX (323 aa).

3 disordered regions span residues 1 to 25 (MGEE…WEMG), 53 to 139 (ERSR…DLSG), and 267 to 298 (GYHH…ESNP). Residues 65 to 87 (SETTLSSLRGGSSGPNTSSSNNN) are compositionally biased toward low complexity. Residues 139-200 (GKTLKRPRLV…HLQKYRLYLK (62 aa)) constitute a DNA-binding region (myb-like GARP).

Interacts with ELF3 and forms a complex with ELF3 and ELF4.

It is found in the nucleus. In terms of biological role, transcription factor that is essential for the generation of the circadian clock oscillation. Is necessary for activation of CCA1 and LHY expression. Is coregulated with TOC1 and seems to be repressed by CCA1 and LHY by direct binding of these proteins to the evening element in the LUX promoter. Directly regulates the expression of PRR9, a major component of the morning transcriptional feedback circuit, by binding specific sites on PRR9 promoter. Binds to its own promoter, inducing a negative auto-regulatory feedback loop within the core clock. Binds to ELF3 and associates with ELF4 in a diurnal complex which is required for the expression of the growth-promoting transcription factors PIF4 and PIF5 and subsequent hypocotyl growth in the early evening. In Arabidopsis thaliana (Mouse-ear cress), this protein is Transcription factor LUX (LUX).